The sequence spans 309 residues: Protease HtpX homolog (309 aa).

The next 2 membrane-spanning stretches (helical) occupy residues 15 to 35 and 54 to 74; these read NAVLTTYCVIFAFIGLLVDVI and IFPTITVIMFLVAFVVIVVCI. Residue His-165 coordinates Zn(2+). Residue Glu-166 is part of the active site. His-169 contacts Zn(2+). 2 helical membrane passes run 181–201 and 213–233; these read VGILSNIMLLVANFSVYFFMG and MILLVLQIVLPFLTLILQMYL. Residue Glu-238 participates in Zn(2+) binding.

The protein belongs to the peptidase M48B family. Zn(2+) serves as cofactor.

Its subcellular location is the cell inner membrane. The protein is Protease HtpX homolog of Helicobacter acinonychis (strain Sheeba).